A 157-amino-acid chain; its full sequence is Putative pre-16S rRNA nuclease (157 aa).

It belongs to the YqgF nuclease family.

The protein resides in the cytoplasm. Functionally, could be a nuclease involved in processing of the 5'-end of pre-16S rRNA. The sequence is that of Putative pre-16S rRNA nuclease from Anaplasma marginale (strain St. Maries).